The sequence spans 113 residues: MAAQVVPVLSKLFDDYQKTTSSKLKIIDAYMTYILFTGIFQFIYCLLVGTFPFNSFLSGFISTVTSFVLASCLRMQVNQENRSEFTAVSTERAFADFIFANLILHLVVVNFLG.

At 1–32 the chain is on the cytoplasmic side; sequence MAAQVVPVLSKLFDDYQKTTSSKLKIIDAYMT. The helical transmembrane segment at 33 to 53 threads the bilayer; sequence YILFTGIFQFIYCLLVGTFPF. At 54-55 the chain is on the lumenal side; that stretch reads NS. The chain crosses the membrane as a helical span at residues 56–78; that stretch reads FLSGFISTVTSFVLASCLRMQVN. Residues 79–92 are Cytoplasmic-facing; sequence QENRSEFTAVSTER. A helical membrane pass occupies residues 93 to 113; sequence AFADFIFANLILHLVVVNFLG.

Belongs to the DAD/OST2 family. In terms of assembly, component of the oligosaccharyltransferase (OST) complex.

The protein localises to the endoplasmic reticulum membrane. The protein operates within protein modification; protein glycosylation. Its function is as follows. Subunit of the oligosaccharyl transferase (OST) complex that catalyzes the initial transfer of a defined glycan (Glc(3)Man(9)GlcNAc(2) in eukaryotes) from the lipid carrier dolichol-pyrophosphate to an asparagine residue within an Asn-X-Ser/Thr consensus motif in nascent polypeptide chains, the first step in protein N-glycosylation. N-glycosylation occurs cotranslationally and the complex associates with the Sec61 complex at the channel-forming translocon complex that mediates protein translocation across the endoplasmic reticulum (ER). All subunits are required for a maximal enzyme activity. Possesses cell death-inhibiting activity. Suppresses some programmed cell death in C.elegans. The polypeptide is Dolichyl-diphosphooligosaccharide--protein glycosyltransferase subunit dad-1 (Caenorhabditis elegans).